The following is a 425-amino-acid chain: Imidazolonepropionase (425 aa).

Positions 78 and 80 each coordinate Fe(3+). Residues His-78 and His-80 each contribute to the Zn(2+) site. Residues Arg-87, Tyr-150, and His-183 each contribute to the 4-imidazolone-5-propanoate site. An N-formimidoyl-L-glutamate-binding site is contributed by Tyr-150. His-248 is a binding site for Fe(3+). Zn(2+) is bound at residue His-248. Gln-251 lines the 4-imidazolone-5-propanoate pocket. Position 323 (Asp-323) interacts with Fe(3+). Residue Asp-323 participates in Zn(2+) binding. Asn-325 and Gly-327 together coordinate N-formimidoyl-L-glutamate. Thr-328 serves as a coordination point for 4-imidazolone-5-propanoate.

This sequence belongs to the metallo-dependent hydrolases superfamily. HutI family. Zn(2+) serves as cofactor. It depends on Fe(3+) as a cofactor.

It localises to the cytoplasm. The catalysed reaction is 4-imidazolone-5-propanoate + H2O = N-formimidoyl-L-glutamate. It functions in the pathway amino-acid degradation; L-histidine degradation into L-glutamate; N-formimidoyl-L-glutamate from L-histidine: step 3/3. Functionally, catalyzes the hydrolytic cleavage of the carbon-nitrogen bond in imidazolone-5-propanoate to yield N-formimidoyl-L-glutamate. It is the third step in the universal histidine degradation pathway. The polypeptide is Imidazolonepropionase (Polaromonas sp. (strain JS666 / ATCC BAA-500)).